Here is a 313-residue protein sequence, read N- to C-terminus: 2,3-dihydroxyphenylpropionate/2,3-dihydroxicinnamic acid 1,2-dioxygenase (313 aa).

His115 (proton donor) is an active-site residue. Catalysis depends on His179, which acts as the Proton acceptor.

The protein belongs to the LigB/MhpB extradiol dioxygenase family. As to quaternary structure, homotetramer. The cofactor is Fe(2+).

The catalysed reaction is 3-(2,3-dihydroxyphenyl)propanoate + O2 = (2Z,4E)-2-hydroxy-6-oxonona-2,4-dienedioate + H(+). The enzyme catalyses (2E)-3-(2,3-dihydroxyphenyl)prop-2-enoate + O2 = (2Z,4E,7E)-2-hydroxy-6-oxonona-2,4,7-trienedioate + H(+). Its pathway is aromatic compound metabolism; 3-phenylpropanoate degradation. Functionally, catalyzes the non-heme iron(II)-dependent oxidative cleavage of 2,3-dihydroxyphenylpropionic acid and 2,3-dihydroxicinnamic acid into 2-hydroxy-6-ketononadienedioate and 2-hydroxy-6-ketononatrienedioate, respectively. This chain is 2,3-dihydroxyphenylpropionate/2,3-dihydroxicinnamic acid 1,2-dioxygenase, found in Xanthobacter autotrophicus (strain ATCC BAA-1158 / Py2).